A 1282-amino-acid polypeptide reads, in one-letter code: Clustered mitochondria protein homolog (1282 aa).

The interval 1 to 50 (MADASQATTPAAEGNPVPEVPETQTPPADVNGTTEQEQTEEGAEQALEDQ) is disordered. A compositionally biased stretch (low complexity) spans 16-36 (PVPEVPETQTPPADVNGTTEQ). Residues 37-47 (EQTEEGAEQAL) are compositionally biased toward acidic residues. The region spanning 331–575 (DNTRSQETYL…RITPLDIAWM (245 aa)) is the Clu domain. Residues 623-650 (EEKKEGEEATEEAKTEEIKTEEAEKSEE) adopt a coiled-coil conformation. Composition is skewed to basic and acidic residues over residues 624–661 (EKKE…KTEE) and 668–680 (VAEK…AKED). Disordered stretches follow at residues 624-680 (EKKE…AKED) and 913-945 (PVAE…TSPV). 3 TPR repeats span residues 1021–1054 (AQMY…AERT), 1063–1096 (VLNY…WKVI), and 1105–1138 (ITTM…CNKV). Residues 1257 to 1282 (VENSEKKKGGKKSKGPSNPKKRGGKA) are disordered. The span at 1264–1282 (KGGKKSKGPSNPKKRGGKA) shows a compositional bias: basic residues.

This sequence belongs to the CLU family. As to quaternary structure, may associate with the eukaryotic translation initiation factor 3 (eIF-3) complex.

The protein resides in the cytoplasm. Functionally, mRNA-binding protein involved in proper cytoplasmic distribution of mitochondria. The polypeptide is Clustered mitochondria protein homolog (Neurospora crassa (strain ATCC 24698 / 74-OR23-1A / CBS 708.71 / DSM 1257 / FGSC 987)).